The chain runs to 268 residues: Ribosomal RNA small subunit methyltransferase A (268 aa).

6 residues coordinate S-adenosyl-L-methionine: Asn-12, Leu-14, Gly-38, Glu-59, Asp-82, and Asn-107.

It belongs to the class I-like SAM-binding methyltransferase superfamily. rRNA adenine N(6)-methyltransferase family. RsmA subfamily.

It is found in the cytoplasm. It catalyses the reaction adenosine(1518)/adenosine(1519) in 16S rRNA + 4 S-adenosyl-L-methionine = N(6)-dimethyladenosine(1518)/N(6)-dimethyladenosine(1519) in 16S rRNA + 4 S-adenosyl-L-homocysteine + 4 H(+). Functionally, specifically dimethylates two adjacent adenosines (A1518 and A1519) in the loop of a conserved hairpin near the 3'-end of 16S rRNA in the 30S particle. May play a critical role in biogenesis of 30S subunits. In Onion yellows phytoplasma (strain OY-M), this protein is Ribosomal RNA small subunit methyltransferase A.